The chain runs to 329 residues: NAD kinase (329 aa).

Residues 1 to 26 (MTTPGTDHNADQGADSGDKATKAASG) are disordered. Catalysis depends on aspartate 104, which acts as the Proton acceptor. Residues 104–105 (DG), arginine 109, 179–180 (NE), aspartate 209, and 220–225 (TAYAFS) each bind NAD(+).

Belongs to the NAD kinase family. It depends on a divalent metal cation as a cofactor.

It is found in the cytoplasm. It catalyses the reaction NAD(+) + ATP = ADP + NADP(+) + H(+). Its function is as follows. Involved in the regulation of the intracellular balance of NAD and NADP, and is a key enzyme in the biosynthesis of NADP. Catalyzes specifically the phosphorylation on 2'-hydroxyl of the adenosine moiety of NAD to yield NADP. This is NAD kinase from Corynebacterium jeikeium (strain K411).